The chain runs to 363 residues: Endopolygalacturonase B (363 aa).

The N-terminal stretch at 1–20 is a signal peptide; sequence MQLLQSSVIAATVGAALVAA. Residues 21–28 constitute a propeptide that is removed on maturation; it reads VPVELKAR. An intrachain disulfide couples C31 to C46. PbH1 repeat units lie at residues 158–187, 188–209, 210–230, 239–260, 268–290, and 302–347; these read SDNL…DVGS, STYI…AINS, GSHI…SIGS, VEDV…RIKT, VSNV…IVEQ, and TNGI…SITG. The N-linked (GlcNAc...) asparagine glycan is linked to N162. D202 functions as the Proton donor in the catalytic mechanism. C204 and C220 are disulfide-bonded. H224 is an active-site residue. Disulfide bonds link C330–C335 and C354–C363. N356 carries N-linked (GlcNAc...) asparagine glycosylation.

The protein belongs to the glycosyl hydrolase 28 family.

The protein localises to the secreted. It carries out the reaction (1,4-alpha-D-galacturonosyl)n+m + H2O = (1,4-alpha-D-galacturonosyl)n + (1,4-alpha-D-galacturonosyl)m.. Involved in maceration and soft-rotting of plant tissue. Hydrolyzes the 1,4-alpha glycosidic bonds of de-esterified pectate in the smooth region of the plant cell wall. The polypeptide is Endopolygalacturonase B (pgaB) (Aspergillus oryzae (strain ATCC 42149 / RIB 40) (Yellow koji mold)).